Here is a 469-residue protein sequence, read N- to C-terminus: Aspartyl/glutamyl-tRNA(Asn/Gln) amidotransferase subunit B (469 aa).

This sequence belongs to the GatB/GatE family. GatB subfamily. Heterotrimer of A, B and C subunits.

It carries out the reaction L-glutamyl-tRNA(Gln) + L-glutamine + ATP + H2O = L-glutaminyl-tRNA(Gln) + L-glutamate + ADP + phosphate + H(+). The catalysed reaction is L-aspartyl-tRNA(Asn) + L-glutamine + ATP + H2O = L-asparaginyl-tRNA(Asn) + L-glutamate + ADP + phosphate + 2 H(+). Allows the formation of correctly charged Asn-tRNA(Asn) or Gln-tRNA(Gln) through the transamidation of misacylated Asp-tRNA(Asn) or Glu-tRNA(Gln) in organisms which lack either or both of asparaginyl-tRNA or glutaminyl-tRNA synthetases. The reaction takes place in the presence of glutamine and ATP through an activated phospho-Asp-tRNA(Asn) or phospho-Glu-tRNA(Gln). In Methanococcus maripaludis (strain C5 / ATCC BAA-1333), this protein is Aspartyl/glutamyl-tRNA(Asn/Gln) amidotransferase subunit B.